A 287-amino-acid chain; its full sequence is 4-hydroxybenzoate octaprenyltransferase (287 aa).

The next 6 helical transmembrane spans lie at 41–61 (LPLLVIFTVGTVLMRSAGCAI), 92–112 (VALAAALSLLAFLLILPLNAL), 133–153 (FFAIPQAYLGIAFGFGIPMAF), 160–180 (VPMLAWVMLLANVFWSVAYDT), 218–238 (LGIYVGIGVLLGFGALYWLGW), and 267–287 (NNWLGGALFAGIAAHYAATWF).

Belongs to the UbiA prenyltransferase family. Mg(2+) serves as cofactor.

The protein resides in the cell inner membrane. It catalyses the reaction all-trans-octaprenyl diphosphate + 4-hydroxybenzoate = 4-hydroxy-3-(all-trans-octaprenyl)benzoate + diphosphate. Its pathway is cofactor biosynthesis; ubiquinone biosynthesis. Catalyzes the prenylation of para-hydroxybenzoate (PHB) with an all-trans polyprenyl group. Mediates the second step in the final reaction sequence of ubiquinone-8 (UQ-8) biosynthesis, which is the condensation of the polyisoprenoid side chain with PHB, generating the first membrane-bound Q intermediate 3-octaprenyl-4-hydroxybenzoate. The protein is 4-hydroxybenzoate octaprenyltransferase of Paraburkholderia xenovorans (strain LB400).